The sequence spans 546 residues: Acyl-CoA ligase oryP (546 aa).

ATP-binding positions include 166–174, 300–305, and arginine 403; these read TSGTTGAPK and QFWLNL. CoA is bound by residues 412–414 and 482–484; these read WDH and LLR. An ATP-binding site is contributed by lysine 499.

It belongs to the ATP-dependent AMP-binding enzyme family.

The protein operates within secondary metabolite biosynthesis. In terms of biological role, acyl-CoA ligase; part of the gene cluster that mediates the biosynthesis of oryzines, natural products with an unusual maleidride backbone. The two subunits of the fungal fatty acid synthase oryfasA and oryfasB probably form octenoic acid. This fatty acid is most likely activated by the acyl-CoA ligase oryP to give octenyl-CoA before the citrate synthase-like protein oryE catalyzes condensation with oxaloacetate to form tricarboxylic acid. The next steps of the pathways are conjectural, but a favorite possible route has been proposed, beginning with decarboxylation and concomitant dehydration by the decarboxylase oryM, followed by tautomerization, which may lead to the production of a diene intermediate. Reduction of this diene intermediate could give the known metabolite piliformic acid. On the pathway to oryzine B and oryzine A, however, hydroxylation of the diene by the alpha-ketoglutarate-dependent dioxygenase oryG and lactonisation by the lactonohydrolases oryH or oryL could give oryzine B directly. Finally, enoyl reduction by the dehydrogenase oryD would then convert oryzine B into oryzine A. The protein is Acyl-CoA ligase oryP of Aspergillus oryzae (strain ATCC 42149 / RIB 40) (Yellow koji mold).